The chain runs to 177 residues: Large ribosomal subunit protein uL6 (177 aa).

Belongs to the universal ribosomal protein uL6 family. In terms of assembly, part of the 50S ribosomal subunit.

Its function is as follows. This protein binds to the 23S rRNA, and is important in its secondary structure. It is located near the subunit interface in the base of the L7/L12 stalk, and near the tRNA binding site of the peptidyltransferase center. The polypeptide is Large ribosomal subunit protein uL6 (Pseudomonas syringae pv. tomato (strain ATCC BAA-871 / DC3000)).